The sequence spans 61 residues: MPNPVKRHSRTRRNMRRAHDFLTPVQASACPQCGKFKLPHRVCPYCGTYKGRTVIKVENLA.

Belongs to the bacterial ribosomal protein bL32 family.

The sequence is that of Large ribosomal subunit protein bL32 from Syntrophus aciditrophicus (strain SB).